Reading from the N-terminus, the 118-residue chain is Integration host factor subunit alpha (118 aa).

The disordered stretch occupies residues 97–118; the sequence is NGAMPMSTEESDENTAQSASGG.

It belongs to the bacterial histone-like protein family. Heterodimer of an alpha and a beta chain.

Its function is as follows. This protein is one of the two subunits of integration host factor, a specific DNA-binding protein that functions in genetic recombination as well as in transcriptional and translational control. The protein is Integration host factor subunit alpha of Rhodopseudomonas palustris (strain ATCC BAA-98 / CGA009).